The sequence spans 518 residues: NADH-quinone oxidoreductase subunit N (518 aa).

The next 14 membrane-spanning stretches (helical) occupy residues 18–38, 45–65, 82–102, 113–133, 136–156, 171–191, 220–240, 254–274, 295–315, 328–348, 355–375, 399–419, 439–459, and 486–506; these read FRPEMALTFGTLVLFVLDLVF, VALLTAGALAVLAAAAGLLAI, AFAIFFKWLFLAAGALTVIIA, IGQFFALLMAIVLGMFMMASA, LLMVYLSLELVSMVSYVLAGF, VIYGGVASGVMLFGMSYLYGL, VALVVAIVFVTAGIGYKVAAV, PTPFTAFLSVGPKAAGFALAI, LAGIPWPAVVGVIAAVTMTLG, LLAYSSIAHAGYTLMGLSAVS, VMIYMLVYLVMNVGAFLVVIL, AVAFAIFLFSLTGLPPFAGFV, WYAWLALIGALNTAIALYYYV, and VMLGAFSVAILVFGIWWTPMV.

It belongs to the complex I subunit 2 family. As to quaternary structure, NDH-1 is composed of 14 different subunits. Subunits NuoA, H, J, K, L, M, N constitute the membrane sector of the complex.

It localises to the cell inner membrane. It catalyses the reaction a quinone + NADH + 5 H(+)(in) = a quinol + NAD(+) + 4 H(+)(out). Its function is as follows. NDH-1 shuttles electrons from NADH, via FMN and iron-sulfur (Fe-S) centers, to quinones in the respiratory chain. The immediate electron acceptor for the enzyme in this species is believed to be ubiquinone. Couples the redox reaction to proton translocation (for every two electrons transferred, four hydrogen ions are translocated across the cytoplasmic membrane), and thus conserves the redox energy in a proton gradient. The chain is NADH-quinone oxidoreductase subunit N from Anaeromyxobacter sp. (strain Fw109-5).